The primary structure comprises 107 residues: UPF0145 protein ETA_21660 (107 aa).

Belongs to the UPF0145 family.

This Erwinia tasmaniensis (strain DSM 17950 / CFBP 7177 / CIP 109463 / NCPPB 4357 / Et1/99) protein is UPF0145 protein ETA_21660.